A 358-amino-acid chain; its full sequence is Heme A synthase (358 aa).

8 helical membrane passes run 22-42, 107-127, 139-159, 173-193, 208-228, 269-289, 302-322, and 324-344; these read IQVW…VGGA, ILGR…WATK, IVPI…ASGI, AFHL…SRGF, FAGW…LVAG, FIHR…AFYV, AFFI…TLLR, and VPIG…CFSV. H271 is a binding site for heme. Residue H332 coordinates heme.

This sequence belongs to the COX15/CtaA family. Type 2 subfamily. As to quaternary structure, interacts with CtaB. Heme b is required as a cofactor.

The protein localises to the cell membrane. It carries out the reaction Fe(II)-heme o + 2 A + H2O = Fe(II)-heme a + 2 AH2. It functions in the pathway porphyrin-containing compound metabolism; heme A biosynthesis; heme A from heme O: step 1/1. Its function is as follows. Catalyzes the conversion of heme O to heme A by two successive hydroxylations of the methyl group at C8. The first hydroxylation forms heme I, the second hydroxylation results in an unstable dihydroxymethyl group, which spontaneously dehydrates, resulting in the formyl group of heme A. This is Heme A synthase from Bartonella quintana (strain Toulouse) (Rochalimaea quintana).